Here is a 382-residue protein sequence, read N- to C-terminus: Lipid-A-disaccharide synthase (382 aa).

The protein belongs to the LpxB family.

The catalysed reaction is a lipid X + a UDP-2-N,3-O-bis[(3R)-3-hydroxyacyl]-alpha-D-glucosamine = a lipid A disaccharide + UDP + H(+). It functions in the pathway bacterial outer membrane biogenesis; LPS lipid A biosynthesis. In terms of biological role, condensation of UDP-2,3-diacylglucosamine and 2,3-diacylglucosamine-1-phosphate to form lipid A disaccharide, a precursor of lipid A, a phosphorylated glycolipid that anchors the lipopolysaccharide to the outer membrane of the cell. This chain is Lipid-A-disaccharide synthase, found in Dechloromonas aromatica (strain RCB).